The chain runs to 146 residues: Hemoglobin subunit beta (146 aa).

In terms of domain architecture, Globin spans 2 to 146; the sequence is HWTAEEKQLI…VAHALARKYH (145 aa). Residues H63 and H92 each contribute to the heme b site.

Belongs to the globin family. In terms of assembly, heterotetramer of two alpha chains and two beta chains. As to expression, red blood cells.

In terms of biological role, involved in oxygen transport from the lung to the various peripheral tissues. In Ara ararauna (Blue-and-yellow macaw), this protein is Hemoglobin subunit beta (HBB).